A 93-amino-acid chain; its full sequence is ATP-dependent Clp protease adapter protein ClpS (93 aa).

It belongs to the ClpS family. In terms of assembly, binds to the N-terminal domain of the chaperone ClpA.

Its function is as follows. Involved in the modulation of the specificity of the ClpAP-mediated ATP-dependent protein degradation. In Gloeobacter violaceus (strain ATCC 29082 / PCC 7421), this protein is ATP-dependent Clp protease adapter protein ClpS.